Here is a 459-residue protein sequence, read N- to C-terminus: MLKLYNSLTRQKEEFKPLQPGKVGMYVCGITIYDLCHIGHGRTFVAFDMIVRYLRYSGYDVNFLRNITDVDDKIIKRAAENKESCDSLTERLIGEMHKDFDSLNMKRPDFEPRATLHMAEIIEMVEKLIEKEHAYVSSNGDVLFSVSSFPEYGRLSGQNLEQLQAGARVEVEDSKRDPMDFVLWKMSKPGEPTWESPWGPGRPGWHIECSAMNSKHLGQHFDIHGGGSDLQFPHHENEIAQSCCAHNTPYVNYWMHTGMVMVDKEKMSKSLNNFFTIRDVLAHYDAATIRYFLLSGHYRSQLNYSEDNLKQAKSALARLYTALKDLDLTVEPAAAENFVSKFKQAMDDDFNTPEAYSVLFDMVREVNRLKVTDLAQASALAVRLKELAGVLGILEQDVDSFFKGESNDAEVAEVEALIAERNRARAEKDWPAADIARDGLNALGVILEDGPEGTTWRKK.

Zn(2+) is bound at residue Cys28. The short motif at 30 to 40 (ITIYDLCHIGH) is the 'HIGH' region element. Positions 209, 234, and 238 each coordinate Zn(2+). The 'KMSKS' region signature appears at 266–270 (KMSKS). Lys269 lines the ATP pocket.

This sequence belongs to the class-I aminoacyl-tRNA synthetase family. Monomer. The cofactor is Zn(2+).

It localises to the cytoplasm. The catalysed reaction is tRNA(Cys) + L-cysteine + ATP = L-cysteinyl-tRNA(Cys) + AMP + diphosphate. The chain is Cysteine--tRNA ligase from Shewanella woodyi (strain ATCC 51908 / MS32).